We begin with the raw amino-acid sequence, 100 residues long: Defensin-B4 (100 aa).

The N-terminal stretch at 1–22 is a signal peptide; that stretch reads MRASLLLFILLVYLAHAPQAQG. The propeptide occupies 23 to 26; the sequence is VFGP. Cystine bridges form between cysteine 29–cysteine 56, cysteine 36–cysteine 50, and cysteine 40–cysteine 57. Positions 60–100 are disordered; it reads STGTSSSQGSHEVPVINSEPALESKPEPQDTQEEEATMVSE. Acidic residues predominate over residues 89-100; sequence DTQEEEATMVSE.

The protein belongs to the beta-defensin family. As to expression, highly expressed in kidney, lowly expressed in spleen, and expressed at lower levels in lung.

Its subcellular location is the secreted. Its function is as follows. Has antimicrobial activity. This chain is Defensin-B4, found in Ornithorhynchus anatinus (Duckbill platypus).